Reading from the N-terminus, the 202-residue chain is Eukaryotic translation initiation factor isoform 4E (202 aa).

Residues 1 to 24 (MATEAPPPVDTTEVPPFTAAETAV) are disordered. MRNA is bound by residues 46–51 (QGAAWG), Lys-78, and 96–97 (WE). Cys-101 and Cys-140 are oxidised to a cystine. MRNA contacts are provided by residues 147 to 152 (RRSQDK) and 191 to 194 (KRER).

It belongs to the eukaryotic initiation factor 4E family. EIF4F is a multi-subunit complex, the composition of which varies with external and internal environmental conditions. It is composed of at least EIF4A, EIF4E and EIF4G. EIF4E is also known to interact with other partners. In higher plants two isoforms of EIF4F have been identified, named isoform EIF4F and isoform EIF(iso)4F. Isoform EIF4F has subunits p220 and p26, whereas isoform EIF(iso)4F has subunits p82 and p28. As to quaternary structure, (Microbial infection) Interacts with viral genome-linked protein (VPg); this interaction is possible in susceptible hosts but impaired in resistant plants. According to the redox status, the Cys-101-Cys-140 disulfide bridge may have a role in regulating protein function by affecting its ability to bind capped mRNA.

The protein localises to the cytoplasm. Its subcellular location is the nucleus. Its function is as follows. Component of the protein complex eIF4F, which is involved in the recognition of the mRNA cap, ATP-dependent unwinding of 5'-terminal secondary structure and recruitment of mRNA to the ribosome. Recognizes and binds the 7-methylguanosine-containing mRNA cap during an early step in the initiation of protein synthesis and facilitates ribosome binding by inducing the unwinding of the mRNAs secondary structures. Key component of recessive resistance to potyviruses. In terms of biological role, (Microbial infection) Susceptibility host factor required for viral infection by recruiting viral RNAs to the host ribosomal complex via an interaction with viral genome-linked protein (VPg). This is Eukaryotic translation initiation factor isoform 4E from Capsicum annuum (Capsicum pepper).